A 200-amino-acid polypeptide reads, in one-letter code: MIAQIRPALVMIVLFTILTGLIYPLAMTGVAKALFPAAAEGSLITRNGQVVGSALIGQNFTSDRYFHGRPSATTTADPNDASKTIPAPYNAANSAGSNLGPTNSALIDRVKTDAEALKAENPSQPVPIDLVTTSGSGLDPHLSPEAALFQVPRVAKARGLSEDALRRLVSEHVEGRLLGVLGEPRVNVLALNLALDESGK.

The helical transmembrane segment at 7-27 threads the bilayer; the sequence is PALVMIVLFTILTGLIYPLAM.

It belongs to the KdpC family. As to quaternary structure, the system is composed of three essential subunits: KdpA, KdpB and KdpC.

Its subcellular location is the cell inner membrane. Its function is as follows. Part of the high-affinity ATP-driven potassium transport (or Kdp) system, which catalyzes the hydrolysis of ATP coupled with the electrogenic transport of potassium into the cytoplasm. This subunit acts as a catalytic chaperone that increases the ATP-binding affinity of the ATP-hydrolyzing subunit KdpB by the formation of a transient KdpB/KdpC/ATP ternary complex. This is Potassium-transporting ATPase KdpC subunit from Methylocella silvestris (strain DSM 15510 / CIP 108128 / LMG 27833 / NCIMB 13906 / BL2).